A 447-amino-acid chain; its full sequence is Tubulin beta chain (447 aa).

Residues Gln11, Glu69, Ser138, Gly142, Thr143, Gly144, Asn204, and Asn226 each coordinate GTP. Glu69 is a Mg(2+) binding site. The tract at residues 425-447 (YQDASISEGEEEYEEEVPIEGEE) is disordered. The segment covering 432–447 (EGEEEYEEEVPIEGEE) has biased composition (acidic residues).

The protein belongs to the tubulin family. Dimer of alpha and beta chains. A typical microtubule is a hollow water-filled tube with an outer diameter of 25 nm and an inner diameter of 15 nM. Alpha-beta heterodimers associate head-to-tail to form protofilaments running lengthwise along the microtubule wall with the beta-tubulin subunit facing the microtubule plus end conferring a structural polarity. Microtubules usually have 13 protofilaments but different protofilament numbers can be found in some organisms and specialized cells. Mg(2+) serves as cofactor.

The protein resides in the cytoplasm. It is found in the cytoskeleton. Tubulin is the major constituent of microtubules, a cylinder consisting of laterally associated linear protofilaments composed of alpha- and beta-tubulin heterodimers. Microtubules grow by the addition of GTP-tubulin dimers to the microtubule end, where a stabilizing cap forms. Below the cap, tubulin dimers are in GDP-bound state, owing to GTPase activity of alpha-tubulin. The polypeptide is Tubulin beta chain (tubA) (Botryotinia fuckeliana (Noble rot fungus)).